The chain runs to 927 residues: Isoleucine--tRNA ligase (927 aa).

The 'HIGH' region motif lies at 60 to 70 (PYANGNIHLGH). Glutamate 557 contacts L-isoleucyl-5'-AMP. A 'KMSKS' region motif is present at residues 598-602 (KMSKS). Residue lysine 601 participates in ATP binding. Zn(2+)-binding residues include cysteine 895, cysteine 898, cysteine 915, and cysteine 918.

This sequence belongs to the class-I aminoacyl-tRNA synthetase family. IleS type 1 subfamily. In terms of assembly, monomer. It depends on Zn(2+) as a cofactor.

The protein localises to the cytoplasm. The catalysed reaction is tRNA(Ile) + L-isoleucine + ATP = L-isoleucyl-tRNA(Ile) + AMP + diphosphate. Catalyzes the attachment of isoleucine to tRNA(Ile). As IleRS can inadvertently accommodate and process structurally similar amino acids such as valine, to avoid such errors it has two additional distinct tRNA(Ile)-dependent editing activities. One activity is designated as 'pretransfer' editing and involves the hydrolysis of activated Val-AMP. The other activity is designated 'posttransfer' editing and involves deacylation of mischarged Val-tRNA(Ile). The polypeptide is Isoleucine--tRNA ligase (Syntrophomonas wolfei subsp. wolfei (strain DSM 2245B / Goettingen)).